The sequence spans 790 residues: Kinesin-like protein KIN-14D (790 aa).

2 disordered regions span residues 1-56 (MPLR…DVGS) and 116-139 (DKENLSSSLQSAEKRYSDKELDAK). A globular region spans residues 1-66 (MPLRNQNRAP…TEECGKVEFT (66 aa)). The span at 16 to 33 (VKKEALSSIPFDKRRKET) shows a compositional bias: basic and acidic residues. Polar residues predominate over residues 34 to 55 (QGTGRRQVLSTVNRQDANSDVG). Coiled coils occupy residues 117–316 (KENL…HVVQ) and 347–426 (SLEE…LELK). The segment covering 127–139 (AEKRYSDKELDAK) has biased composition (basic and acidic residues). The Kinesin motor domain occupies 428–769 (NIRVFCRVRP…LRFAARVNAC (342 aa)). 513–520 (GQTGSGKT) is an ATP binding site.

Belongs to the TRAFAC class myosin-kinesin ATPase superfamily. Kinesin family. KIN-14 subfamily. In terms of tissue distribution, slightly expressed in anther lobes with pollen mother cells at anther stage 5. Strongly expressed at anther stage 6 in the tapetum and meiotic cells. Also detected in the gynoecium and the ovule.

Its subcellular location is the cytoplasm. The protein localises to the cytoskeleton. It is found in the phragmoplast. In terms of biological role, kinesin that supports microtubule movement in an ATP-dependent manner and that functions as a minus-end directed motor as well as a plus-end tracking protein. During mitosis, is involved in early spindle assembly. Participates in the capture of antiparallel interpolar microtubules and helps in generating force to coalign microtubules. The chain is Kinesin-like protein KIN-14D from Arabidopsis thaliana (Mouse-ear cress).